The sequence spans 210 residues: Large ribosomal subunit protein bL25 (210 aa).

The disordered stretch occupies residues 186-210 (ISSASTEKEAESNQESTSTTPSSES). The span at 198–210 (NQESTSTTPSSES) shows a compositional bias: low complexity.

It belongs to the bacterial ribosomal protein bL25 family. CTC subfamily. In terms of assembly, part of the 50S ribosomal subunit; part of the 5S rRNA/L5/L18/L25 subcomplex. Contacts the 5S rRNA. Binds to the 5S rRNA independently of L5 and L18.

This is one of the proteins that binds to the 5S RNA in the ribosome where it forms part of the central protuberance. In Ehrlichia chaffeensis (strain ATCC CRL-10679 / Arkansas), this protein is Large ribosomal subunit protein bL25.